The following is a 116-amino-acid chain: Protein Rev (116 aa).

2 positions are modified to phosphoserine; by host CK2: Ser5 and Ser8. Residues 18 to 26 (IIKHLYQSN) form a homomultimerization region. Positions 20-48 (KHLYQSNPPPKPEGTRQARRNRRRRWRER) are disordered. The Nuclear localization signal and RNA-binding (RRE) signature appears at 34–50 (TRQARRNRRRRWRERQR). Positions 36–48 (QARRNRRRRWRER) are enriched in basic residues. Positions 73 to 84 (LQLPPLERLTLD) match the Nuclear export signal and binding to XPO1 motif. Positions 91–116 (TSGTQGVGSPQILVESPAVLESGTKE) are disordered. Phosphoserine; by host occurs at positions 92 and 99.

The protein belongs to the HIV-1 REV protein family. As to quaternary structure, homomultimer; when bound to the RRE. Multimeric assembly is essential for activity and may involve XPO1. Binds to human KPNB1, XPO1, TNPO1, RANBP5 and IPO7. Interacts with the viral Integrase. Interacts with human KHDRBS1. Interacts with human NAP1; this interaction decreases Rev multimerization and stimulates its activity. Interacts with human DEAD-box helicases DDX3 and DDX24; these interactions may serve for viral RNA export to the cytoplasm and packaging, respectively. Interacts with human PSIP1; this interaction may inhibit HIV-1 DNA integration by promoting dissociation of the Integrase-LEDGF/p75 complex. Asymmetrically arginine dimethylated at one site by host PRMT6. Methylation impairs the RNA-binding activity and export of viral RNA from the nucleus to the cytoplasm. In terms of processing, phosphorylated by protein kinase CK2. Presence of, and maybe binding to the N-terminus of the regulatory beta subunit of CK2 is necessary for CK2-mediated Rev's phosphorylation.

The protein localises to the host nucleus. The protein resides in the host nucleolus. It localises to the host cytoplasm. Functionally, escorts unspliced or incompletely spliced viral pre-mRNAs (late transcripts) out of the nucleus of infected cells. These pre-mRNAs carry a recognition sequence called Rev responsive element (RRE) located in the env gene, that is not present in fully spliced viral mRNAs (early transcripts). This function is essential since most viral proteins are translated from unspliced or partially spliced pre-mRNAs which cannot exit the nucleus by the pathway used by fully processed cellular mRNAs. Rev itself is translated from a fully spliced mRNA that readily exits the nucleus. Rev's nuclear localization signal (NLS) binds directly to KPNB1/Importin beta-1 without previous binding to KPNA1/Importin alpha-1. KPNB1 binds to the GDP bound form of RAN (Ran-GDP) and targets Rev to the nucleus. In the nucleus, the conversion from Ran-GDP to Ran-GTP dissociates Rev from KPNB1 and allows Rev's binding to the RRE in viral pre-mRNAs. Rev multimerization on the RRE via cooperative assembly exposes its nuclear export signal (NES) to the surface. Rev can then form a complex with XPO1/CRM1 and Ran-GTP, leading to nuclear export of the complex. Conversion from Ran-GTP to Ran-GDP mediates dissociation of the Rev/RRE/XPO1/RAN complex, so that Rev can return to the nucleus for a subsequent round of export. Beside KPNB1, also seems to interact with TNPO1/Transportin-1, RANBP5/IPO5 and IPO7/RANBP7 for nuclear import. The nucleoporin-like HRB/RIP is an essential cofactor that probably indirectly interacts with Rev to release HIV RNAs from the perinuclear region to the cytoplasm. The sequence is that of Protein Rev from Human immunodeficiency virus type 1 group M subtype B (isolate CDC-451) (HIV-1).